A 145-amino-acid chain; its full sequence is HKREADFCSKGNLTNPEISPVEHYPPTNEIKEEATSWEEGNQSDYSINSLTEQIQGPYTPTPIMEYNHLIMQDNKYDVNACNSPLQETDVTKHALHKRDIDRRQRTQTQLKYDHRTNTGDKPLSCSECGKCFSTYHVLARHQKTH.

Positions 1–25 (HKREADFCSKGNLTNPEISPVEHYP) are disordered. The segment at 123–145 (LSCSECGKCFSTYHVLARHQKTH) adopts a C2H2-type zinc-finger fold.

The protein belongs to the krueppel C2H2-type zinc-finger protein family.

It is found in the nucleus. Its function is as follows. May be involved in transcriptional regulation. This chain is Oocyte zinc finger protein XlCOF8.4I, found in Xenopus laevis (African clawed frog).